The primary structure comprises 331 residues: Malate dehydrogenase (331 aa).

14-20 (GAAGSIG) is an NAD(+) binding site. Substrate contacts are provided by R95 and R101. NAD(+) is bound by residues N108, Q115, and 132-134 (VGN). Substrate is bound by residues N134 and R165. H190 acts as the Proton acceptor in catalysis.

This sequence belongs to the LDH/MDH superfamily. MDH type 2 family.

The enzyme catalyses (S)-malate + NAD(+) = oxaloacetate + NADH + H(+). In terms of biological role, catalyzes the reversible oxidation of malate to oxaloacetate. This chain is Malate dehydrogenase, found in Rhodococcus opacus (strain B4).